The sequence spans 260 residues: Activator of 90 kDa heat shock protein ATPase homolog 2 (260 aa).

Belongs to the AHA1 family.

Functionally, co-chaperone that stimulates HSP90 ATPase activity. This Bos taurus (Bovine) protein is Activator of 90 kDa heat shock protein ATPase homolog 2 (AHSA2).